The chain runs to 198 residues: Nucleoid occlusion factor SlmA (198 aa).

The 61-residue stretch at 10–70 (NRREEILQSL…SLIEFIEDSL (61 aa)) folds into the HTH tetR-type domain. The segment at residues 33 to 52 (TTAKLAASVGVSEAALYRHF) is a DNA-binding region (H-T-H motif). The stretch at 117–144 (EQDRLQGRINQLFERIEAQLRQVLREKR) forms a coiled coil.

This sequence belongs to the nucleoid occlusion factor SlmA family. As to quaternary structure, homodimer. Interacts with FtsZ.

The protein resides in the cytoplasm. Its subcellular location is the nucleoid. Its function is as follows. Required for nucleoid occlusion (NO) phenomenon, which prevents Z-ring formation and cell division over the nucleoid. Acts as a DNA-associated cell division inhibitor that binds simultaneously chromosomal DNA and FtsZ, and disrupts the assembly of FtsZ polymers. SlmA-DNA-binding sequences (SBS) are dispersed on non-Ter regions of the chromosome, preventing FtsZ polymerization at these regions. The protein is Nucleoid occlusion factor SlmA of Salmonella paratyphi A (strain ATCC 9150 / SARB42).